Reading from the N-terminus, the 256-residue chain is Trypsin alpha (256 aa).

The N-terminal stretch at 1 to 22 is a signal peptide; sequence MLKIVILLSAVVCALGGTVPEG. The propeptide at 23 to 30 is activation peptide; that stretch reads LLPQLDGR. Residues 31–254 form the Peptidase S1 domain; it reads IVGGSATTIS…LRSWVVSTAN (224 aa). C56 and C72 form a disulfide bridge. Catalysis depends on charge relay system residues H71 and D116. Disulfide bonds link C180–C197 and C206–C230. The active-site Charge relay system is S210.

It belongs to the peptidase S1 family. Synthesized in the midgut of both larvae and adults, primarily in the ventriculus and gastric caeca.

It is found in the secreted. The protein localises to the extracellular space. It carries out the reaction Preferential cleavage: Arg-|-Xaa, Lys-|-Xaa.. The sequence is that of Trypsin alpha (alphaTry) from Drosophila melanogaster (Fruit fly).